The primary structure comprises 442 residues: Glutamyl-tRNA reductase (442 aa).

Substrate is bound by residues 49 to 52 (TCNR), Ser109, 114 to 116 (ESQ), and Gln120. Cys50 acts as the Nucleophile in catalysis. Position 189–194 (189–194 (GAGAMS)) interacts with NADP(+).

This sequence belongs to the glutamyl-tRNA reductase family. Homodimer.

It catalyses the reaction (S)-4-amino-5-oxopentanoate + tRNA(Glu) + NADP(+) = L-glutamyl-tRNA(Glu) + NADPH + H(+). It functions in the pathway porphyrin-containing compound metabolism; protoporphyrin-IX biosynthesis; 5-aminolevulinate from L-glutamyl-tRNA(Glu): step 1/2. Its function is as follows. Catalyzes the NADPH-dependent reduction of glutamyl-tRNA(Glu) to glutamate 1-semialdehyde (GSA). The protein is Glutamyl-tRNA reductase of Kineococcus radiotolerans (strain ATCC BAA-149 / DSM 14245 / SRS30216).